We begin with the raw amino-acid sequence, 218 residues long: Ribosomal RNA small subunit methyltransferase G (218 aa).

S-adenosyl-L-methionine-binding positions include Gly82, Leu87, 137-138 (VE), and Arg152.

It belongs to the methyltransferase superfamily. RNA methyltransferase RsmG family.

Its subcellular location is the cytoplasm. The catalysed reaction is guanosine(527) in 16S rRNA + S-adenosyl-L-methionine = N(7)-methylguanosine(527) in 16S rRNA + S-adenosyl-L-homocysteine. Specifically methylates the N7 position of guanine in position 527 of 16S rRNA. The chain is Ribosomal RNA small subunit methyltransferase G from Herminiimonas arsenicoxydans.